A 183-amino-acid polypeptide reads, in one-letter code: Ribosome maturation factor RimM (183 aa).

The region spanning 105–181 (ANEYHLMDLI…RIEIDPPLGL (77 aa)) is the PRC barrel domain.

The protein belongs to the RimM family. In terms of assembly, binds ribosomal protein uS19.

The protein resides in the cytoplasm. In terms of biological role, an accessory protein needed during the final step in the assembly of 30S ribosomal subunit, possibly for assembly of the head region. Essential for efficient processing of 16S rRNA. May be needed both before and after RbfA during the maturation of 16S rRNA. It has affinity for free ribosomal 30S subunits but not for 70S ribosomes. The protein is Ribosome maturation factor RimM of Thermosynechococcus vestitus (strain NIES-2133 / IAM M-273 / BP-1).